Consider the following 603-residue polypeptide: Geraniol synthase, chloroplastic (603 aa).

The N-terminal 50 residues, 1-50 (MALQMIAPFLSSFLPNPRHSLAAHGLTHQKCVSKHISCSTTTPTYSTTVP), are a transit peptide targeting the chloroplast. Residues arginine 301, aspartate 338, aspartate 342, arginine 479, and aspartate 482 each coordinate (2E)-geranyl diphosphate. Residues aspartate 338 and aspartate 342 each contribute to the Mg(2+) site. Positions 338–342 (DDIYD) match the DDXXD motif motif. Mg(2+) contacts are provided by aspartate 482, threonine 486, and glutamate 490.

The protein belongs to the terpene synthase family. Tpsb subfamily. As to quaternary structure, homodimer. The cofactor is Mg(2+). Requires Mn(2+) as cofactor. In terms of tissue distribution, expressed in the oil cells of the leaves.

The protein resides in the plastid. Its subcellular location is the chloroplast. The catalysed reaction is (2E)-geranyl diphosphate + H2O = (2E)-geraniol + diphosphate. The protein operates within secondary metabolite biosynthesis; terpenoid biosynthesis. Its function is as follows. Monoterpene synthase that catalyzes the formation of geraniol from geranyl diphosphate. The polypeptide is Geraniol synthase, chloroplastic (GerS) (Cinnamomum tenuipile (Alseodaphne mollis)).